The chain runs to 296 residues: Sulfotransferase 1B1 (296 aa).

48–53 lines the 3'-phosphoadenylyl sulfate pocket; that stretch reads KSGTTW. 107-109 contributes to the substrate binding site; that stretch reads KTH. The Proton acceptor role is filled by His-109. Residues Arg-131, Ser-139, Tyr-194, 228–233, and 258–260 each bind 3'-phosphoadenylyl sulfate; these read TSFEMM and RKG.

The protein belongs to the sulfotransferase 1 family. In terms of tissue distribution, expressed highly in the colon, kidney and small intestine of male and female dogs. Highly expressed in the jejunum and ileum of the male dog than the female dog, which displayed more expression in duodenum (at protein level).

It localises to the cytoplasm. The catalysed reaction is a phenol + 3'-phosphoadenylyl sulfate = an aryl sulfate + adenosine 3',5'-bisphosphate + H(+). The enzyme catalyses 3,3',5-triiodo-L-thyronine + 3'-phosphoadenylyl sulfate = 3,3',5-triiodo-L-thyronine sulfate + adenosine 3',5'-bisphosphate + H(+). It catalyses the reaction 3,3',5'-triiodo-L-thyronine + 3'-phosphoadenylyl sulfate = 3,3',5'-triiodo-L-thyronine sulfate + adenosine 3',5'-bisphosphate + H(+). It carries out the reaction 3,3'-diiodo-L-thyronine + 3'-phosphoadenylyl sulfate = 3,3'-diiodo-L-thyronine sulfate + adenosine 3',5'-bisphosphate + H(+). The catalysed reaction is 4-ethylphenol + 3'-phosphoadenylyl sulfate = 4-ethylphenyl sulfate + adenosine 3',5'-bisphosphate + H(+). Functionally, sulfotransferase that utilizes 3'-phospho-5'-adenylyl sulfate (PAPS) as sulfonate donor to catalyze the sulfate conjugation of dopamine, small phenols such as 1-naphthol and p-nitrophenol and thyroid hormones, including 3,3'-diiodothyronine, triidothyronine (T3) and reverse triiodothyronine (rT3). May play a role in gut microbiota-host metabolic interaction. O-sulfonates 4-ethylphenol (4-EP), a dietary tyrosine-derived metabolite produced by gut bacteria. The product 4-EPS crosses the blood-brain barrier and may negatively regulate oligodendrocyte maturation and myelination, affecting the functional connectivity of different brain regions associated with the limbic system. The sequence is that of Sulfotransferase 1B1 (SULT1B1) from Canis lupus familiaris (Dog).